The chain runs to 200 residues: Guanylate kinase (200 aa).

The Guanylate kinase-like domain occupies 6-184; sequence GLLIVLSGPS…AVDKLKSILL (179 aa). 13–20 contributes to the ATP binding site; that stretch reads GPSGAGKG.

Belongs to the guanylate kinase family.

It localises to the cytoplasm. The enzyme catalyses GMP + ATP = GDP + ADP. In terms of biological role, essential for recycling GMP and indirectly, cGMP. This chain is Guanylate kinase, found in Desulfitobacterium hafniense (strain Y51).